The sequence spans 143 residues: 3-hydroxyacyl-[acyl-carrier-protein] dehydratase FabZ (143 aa).

Residue His48 is part of the active site.

The protein belongs to the thioester dehydratase family. FabZ subfamily.

It is found in the cytoplasm. It carries out the reaction a (3R)-hydroxyacyl-[ACP] = a (2E)-enoyl-[ACP] + H2O. Involved in unsaturated fatty acids biosynthesis. Catalyzes the dehydration of short chain beta-hydroxyacyl-ACPs and long chain saturated and unsaturated beta-hydroxyacyl-ACPs. This is 3-hydroxyacyl-[acyl-carrier-protein] dehydratase FabZ from Roseiflexus sp. (strain RS-1).